Reading from the N-terminus, the 396-residue chain is Elongation factor Tu (396 aa).

Residues 10 to 205 (KPHVNIGTIG…ACDDNIPDPV (196 aa)) enclose the tr-type G domain. Residues 19–26 (GHVDHGKT) form a G1 region. 19 to 26 (GHVDHGKT) serves as a coordination point for GTP. Thr26 contributes to the Mg(2+) binding site. The G2 stretch occupies residues 62–66 (GITIN). Positions 83–86 (DAPG) are G3. GTP-binding positions include 83–87 (DAPGH) and 138–141 (NKCD). The interval 138–141 (NKCD) is G4. The G5 stretch occupies residues 175–177 (SAL).

It belongs to the TRAFAC class translation factor GTPase superfamily. Classic translation factor GTPase family. EF-Tu/EF-1A subfamily. As to quaternary structure, monomer.

It is found in the cytoplasm. It catalyses the reaction GTP + H2O = GDP + phosphate + H(+). Functionally, GTP hydrolase that promotes the GTP-dependent binding of aminoacyl-tRNA to the A-site of ribosomes during protein biosynthesis. This Corynebacterium efficiens (strain DSM 44549 / YS-314 / AJ 12310 / JCM 11189 / NBRC 100395) protein is Elongation factor Tu.